Reading from the N-terminus, the 511-residue chain is Light-independent protochlorophyllide reductase subunit B (511 aa).

D36 provides a ligand contact to [4Fe-4S] cluster. D299 acts as the Proton donor in catalysis. Position 434–435 (434–435) interacts with substrate; that stretch reads GM.

The protein belongs to the ChlB/BchB/BchZ family. Protochlorophyllide reductase is composed of three subunits; ChlL, ChlN and ChlB. Forms a heterotetramer of two ChlB and two ChlN subunits. [4Fe-4S] cluster is required as a cofactor.

It is found in the plastid. The protein resides in the chloroplast. It catalyses the reaction chlorophyllide a + oxidized 2[4Fe-4S]-[ferredoxin] + 2 ADP + 2 phosphate = protochlorophyllide a + reduced 2[4Fe-4S]-[ferredoxin] + 2 ATP + 2 H2O. The protein operates within porphyrin-containing compound metabolism; chlorophyll biosynthesis (light-independent). Its function is as follows. Component of the dark-operative protochlorophyllide reductase (DPOR) that uses Mg-ATP and reduced ferredoxin to reduce ring D of protochlorophyllide (Pchlide) to form chlorophyllide a (Chlide). This reaction is light-independent. The NB-protein (ChlN-ChlB) is the catalytic component of the complex. The polypeptide is Light-independent protochlorophyllide reductase subunit B (Huperzia lucidula (Shining clubmoss)).